A 1857-amino-acid chain; its full sequence is Fer-1-like protein 6 (1857 aa).

Over 1-1824 the chain is Cytoplasmic; the sequence is MFGLKVKKKR…YLIWKNYKKY (1824 aa). The tract at residues 15–63 is disordered; sequence KGLILANKAAKDSQGDTEALQEEPSHQEGPRGDLVHDDASIFPVPSASP. Positions 37 to 53 are enriched in basic and acidic residues; sequence EPSHQEGPRGDLVHDDA. 2 consecutive C2 domains span residues 65-181 and 225-356; these read RRSK…QFCN and PIEK…DKGF. Positions 426 to 447 are enriched in basic and acidic residues; it reads SKDKDSKSSKGKDKADKTEDGK. The tract at residues 426-469 is disordered; that stretch reads SKDKDSKSSKGKDKADKTEDGKSQQASNKTNSTEVEVESFDVPP. The span at 448-459 shows a compositional bias: polar residues; that stretch reads SQQASNKTNSTE. C2 domains lie at 810-937 and 969-1099; these read GTNH…RLCY and PVEP…LAPI. Positions 842, 848, 904, and 906 each coordinate Ca(2+). 3 disordered regions span residues 1101 to 1148, 1161 to 1203, and 1224 to 1246; these read QVDG…VVPD, PDSS…RTIA, and AQKAKERNPKGKKGNTEAKPDEV. Polar residues predominate over residues 1113-1129; the sequence is DSLTATESSGAHSSSQD. Basic and acidic residues predominate over residues 1178–1189; sequence PPKDGKPKDPRK. Basic residues predominate over residues 1190-1200; sequence PSRRSTKRRKR. A compositionally biased stretch (basic and acidic residues) spans 1226–1245; sequence KAKERNPKGKKGNTEAKPDE. C2 domains are found at residues 1338–1457 and 1578–1729; these read DSGQ…AICG and DMPQ…KACD. Residues aspartate 1372, aspartate 1378, aspartate 1427, aspartate 1429, and aspartate 1435 each contribute to the Ca(2+) site. The chain crosses the membrane as a helical span at residues 1825–1845; sequence IIIAFILIILIIFLVLFIYTL. At 1846-1857 the chain is on the extracellular side; the sequence is PGAISRRIVVGS.

Belongs to the ferlin family. Requires Ca(2+) as cofactor.

It is found in the membrane. The polypeptide is Fer-1-like protein 6 (FER1L6) (Homo sapiens (Human)).